The following is a 200-amino-acid chain: Glycerol-3-phosphate acyltransferase (200 aa).

5 helical membrane-spanning segments follow: residues 2-22 (FNIP…AVIV), 51-71 (KAAV…VLLA), 84-104 (AIAA…FFGF), 114-134 (LGVL…IWLV), and 159-179 (FFMP…LVLF).

This sequence belongs to the PlsY family. Probably interacts with PlsX.

It is found in the cell inner membrane. It catalyses the reaction an acyl phosphate + sn-glycerol 3-phosphate = a 1-acyl-sn-glycero-3-phosphate + phosphate. Its pathway is lipid metabolism; phospholipid metabolism. Functionally, catalyzes the transfer of an acyl group from acyl-phosphate (acyl-PO(4)) to glycerol-3-phosphate (G3P) to form lysophosphatidic acid (LPA). This enzyme utilizes acyl-phosphate as fatty acyl donor, but not acyl-CoA or acyl-ACP. This chain is Glycerol-3-phosphate acyltransferase, found in Neisseria meningitidis serogroup C / serotype 2a (strain ATCC 700532 / DSM 15464 / FAM18).